A 214-amino-acid chain; its full sequence is Ribosomal RNA small subunit methyltransferase G (214 aa).

S-adenosyl-L-methionine-binding positions include Gly-78, Leu-83, 129-130, and Arg-144; that span reads AE.

The protein belongs to the methyltransferase superfamily. RNA methyltransferase RsmG family.

The protein localises to the cytoplasm. It carries out the reaction guanosine(527) in 16S rRNA + S-adenosyl-L-methionine = N(7)-methylguanosine(527) in 16S rRNA + S-adenosyl-L-homocysteine. Its function is as follows. Specifically methylates the N7 position of guanine in position 527 of 16S rRNA. This is Ribosomal RNA small subunit methyltransferase G from Marinobacter nauticus (strain ATCC 700491 / DSM 11845 / VT8) (Marinobacter aquaeolei).